A 160-amino-acid polypeptide reads, in one-letter code: 6,7-dimethyl-8-ribityllumazine synthase (160 aa).

Residues W27, 59 to 61 (AIE), and 81 to 83 (VVI) each bind 5-amino-6-(D-ribitylamino)uracil. 86-87 (QT) is a binding site for (2S)-2-hydroxy-3-oxobutyl phosphate. The active-site Proton donor is the H89. N114 lines the 5-amino-6-(D-ribitylamino)uracil pocket. R128 provides a ligand contact to (2S)-2-hydroxy-3-oxobutyl phosphate.

This sequence belongs to the DMRL synthase family. Homopentamer.

It carries out the reaction (2S)-2-hydroxy-3-oxobutyl phosphate + 5-amino-6-(D-ribitylamino)uracil = 6,7-dimethyl-8-(1-D-ribityl)lumazine + phosphate + 2 H2O + H(+). It participates in cofactor biosynthesis; riboflavin biosynthesis; riboflavin from 2-hydroxy-3-oxobutyl phosphate and 5-amino-6-(D-ribitylamino)uracil: step 1/2. In terms of biological role, catalyzes the formation of 6,7-dimethyl-8-ribityllumazine by condensation of 5-amino-6-(D-ribitylamino)uracil with 3,4-dihydroxy-2-butanone 4-phosphate. This is the penultimate step in the biosynthesis of riboflavin. The chain is 6,7-dimethyl-8-ribityllumazine synthase (ribH) from Mycobacterium tuberculosis (strain CDC 1551 / Oshkosh).